The following is a 370-amino-acid chain: Aminomethyltransferase (370 aa).

It belongs to the GcvT family. In terms of assembly, the glycine cleavage system is composed of four proteins: P, T, L and H.

The enzyme catalyses N(6)-[(R)-S(8)-aminomethyldihydrolipoyl]-L-lysyl-[protein] + (6S)-5,6,7,8-tetrahydrofolate = N(6)-[(R)-dihydrolipoyl]-L-lysyl-[protein] + (6R)-5,10-methylene-5,6,7,8-tetrahydrofolate + NH4(+). In terms of biological role, the glycine cleavage system catalyzes the degradation of glycine. The sequence is that of Aminomethyltransferase from Prochlorococcus marinus (strain MIT 9515).